A 448-amino-acid chain; its full sequence is Tumor necrosis factor receptor superfamily member EDAR (448 aa).

The N-terminal stretch at 1–26 (MAHVGDCTQTPWLPVLVVSLMCSARA) is a signal peptide. Residues 27-187 (EYSNCGENEY…LSGQGHLATA (161 aa)) are Extracellular-facing. TNFR-Cys repeat units follow at residues 30–71 (NCGE…DYGC), 73–113 (PCPA…DAEC), and 115–148 (PCLP…TKEC). 6 cysteine pairs are disulfide-bonded: cysteine 31–cysteine 44, cysteine 47–cysteine 60, cysteine 50–cysteine 71, cysteine 74–cysteine 87, cysteine 93–cysteine 113, and cysteine 135–cysteine 148. Asparagine 38 carries an N-linked (GlcNAc...) asparagine glycan. The chain crosses the membrane as a helical span at residues 188–208 (LIIAMSTIFIMAIAIVLIIMF). Residues 209-448 (YILKTKPSAP…PPASQPHAAS (240 aa)) are Cytoplasmic-facing. A disordered region spans residues 220–297 (CCTSHPGKSV…EEPAPDKQGS (78 aa)). Residues 233-243 (VSKDEEKKEAP) are compositionally biased toward basic and acidic residues. Residues 271 to 283 (DASSENEQLLSRS) are compositionally biased toward polar residues. The region spanning 358 to 431 (RMLSSTYNSE…DAVESLCADI (74 aa)) is the Death domain.

As to quaternary structure, binds to EDARADD. Associates with TRAF1, TRAF2, TRAF3 and NIK. As to expression, detected in fetal kidney, lung, skin and cultured neonatal epidermal keratinocytes. Not detected in lymphoblast and fibroblast cell lines.

The protein localises to the membrane. Receptor for EDA isoform A1, but not for EDA isoform A2. Mediates the activation of NF-kappa-B and JNK. May promote caspase-independent cell death. In Homo sapiens (Human), this protein is Tumor necrosis factor receptor superfamily member EDAR (EDAR).